The primary structure comprises 219 residues: MVCAWQLWLSPRPKRSVIASGSHIYSNDDAALFEFLKEDDGRWVVRETHYINNPLVKNGLSGPPLHIHWKQAEYFKVEQGVIGIHKNGKQLRVTKDDGVIEVPAGTRHKFWSHPSNQEDLVFKVWAEPQGLDHSFDEKFIRNLIGYQRDCKMANMAPSVFQLMLICYDCATLATPPFWVPLWLLTSIQYVLAYWIGGHLLGYKPSYSEYYREPGDKKTM.

Belongs to the oxidoreductase OpS7 family.

It functions in the pathway secondary metabolite biosynthesis. Functionally, probable oxidoreductase; part of the gene cluster that mediates the biosynthesis of virensols and trichoxide, fungal natural products that contain or are derived from a salicylaldehyde core. The pathway begins with the synthesis of the reduced chain in virensol C by the highly reducing polyketide synthase virA via condensation of one acetate and 8 malonate units. VirA has interesting programming rules since the first 2 ketides are fully reduced, the 3 following ketides undergo beta-dehydration, and the last 3 ketides are only reduced to beta-hydroxys to yield the trihydroxy portion. The production of aldehyde virensol C by virA alone is surprising, since virA does not contain a reductase (R) domain that is typically associated with reductive product release in HRPKS. The cupin-domain enzyme virC is involved in enhancing virA product turnover. The short-chain dehydrogenase virB then oxidizes the C-7 alcohol of virensol C to a ketone, yielding virensol D. Virensol D is further transformed to salicylaldehyde 5-deoxyaurocitrin by the short-chain dehydrogenase virD. VirD catalyzes the dehydrogenation of C-3 to form the beta-ketone aldehyde, which is followed by the generation of the nucleophilic C-2 that is required for the intramolecular aldol condensation between C-2 and C-7, itself followed by dehydration and aromatization which leads to salicylaldehyde 5-deoxyaurocitrin. While the dehydrogenation of virensol D is definitely catalyzed by virD, the aldol condensation and dehydration may be uncatalyzed or assisted by virD. The short chain dehydrogenase virG then converts salicylaldehyde 5-deoxyaurocitrin into virensol B which is further hydroxylated by the cytochrome P450 monooxygenase virE to yield the hydroquinone virensol A. VirI then may oxidize virensol A to form the quinone, while virH performs the epoxidation. Finally, the two remaining short-chain dehydrogenases, virK and virL, are probably responsible for reducing the ketones to the corresponding alcohols to furnish the epoxycyclohexanol structure in trichoxide. This is Probable oxidoreductase virH from Hypocrea virens (strain Gv29-8 / FGSC 10586) (Gliocladium virens).